A 118-amino-acid polypeptide reads, in one-letter code: uncharacterized protein (118 aa).

3 helical membrane passes run 20–39, 46–63, and 67–85; these read VEGP…LLWI, LVVV…GEAV, and LSLV…AMSG. Residues 85-118 form a disordered region; the sequence is GDKSKKKGKKQRSILKDADDWDDDSWDDEGDWDE. The span at 88–97 shows a compositional bias: basic residues; it reads SKKKGKKQRS. The segment covering 103–118 has biased composition (acidic residues); it reads DDWDDDSWDDEGDWDE.

The protein localises to the cell membrane. This is an uncharacterized protein from Archaeoglobus fulgidus (strain ATCC 49558 / DSM 4304 / JCM 9628 / NBRC 100126 / VC-16).